A 176-amino-acid chain; its full sequence is Ribosome maturation factor RimM (176 aa).

In terms of domain architecture, PRC barrel spans 97 to 176; it reads GDEFYWRELV…TIQVDWDPSF (80 aa).

This sequence belongs to the RimM family. As to quaternary structure, binds ribosomal protein uS19.

It localises to the cytoplasm. An accessory protein needed during the final step in the assembly of 30S ribosomal subunit, possibly for assembly of the head region. Essential for efficient processing of 16S rRNA. May be needed both before and after RbfA during the maturation of 16S rRNA. It has affinity for free ribosomal 30S subunits but not for 70S ribosomes. The chain is Ribosome maturation factor RimM from Pseudoalteromonas atlantica (strain T6c / ATCC BAA-1087).